We begin with the raw amino-acid sequence, 312 residues long: Acetyl-coenzyme A carboxylase carboxyl transferase subunit alpha (312 aa).

Residues 36 to 286 (RLEKEVKSIY…KEYFLDALRT (251 aa)) form the CoA carboxyltransferase C-terminal domain.

Belongs to the AccA family. As to quaternary structure, acetyl-CoA carboxylase is a heterohexamer composed of biotin carboxyl carrier protein (AccB), biotin carboxylase (AccC) and two subunits each of ACCase subunit alpha (AccA) and ACCase subunit beta (AccD).

It is found in the cytoplasm. It catalyses the reaction N(6)-carboxybiotinyl-L-lysyl-[protein] + acetyl-CoA = N(6)-biotinyl-L-lysyl-[protein] + malonyl-CoA. The protein operates within lipid metabolism; malonyl-CoA biosynthesis; malonyl-CoA from acetyl-CoA: step 1/1. Component of the acetyl coenzyme A carboxylase (ACC) complex. First, biotin carboxylase catalyzes the carboxylation of biotin on its carrier protein (BCCP) and then the CO(2) group is transferred by the carboxyltransferase to acetyl-CoA to form malonyl-CoA. The polypeptide is Acetyl-coenzyme A carboxylase carboxyl transferase subunit alpha (Helicobacter pylori (strain P12)).